Here is a 301-residue protein sequence, read N- to C-terminus: Ribosomal RNA small subunit methyltransferase H (301 aa).

S-adenosyl-L-methionine-binding positions include 33–35, aspartate 52, phenylalanine 79, aspartate 100, and glutamine 107; that span reads GGH.

This sequence belongs to the methyltransferase superfamily. RsmH family.

Its subcellular location is the cytoplasm. It catalyses the reaction cytidine(1402) in 16S rRNA + S-adenosyl-L-methionine = N(4)-methylcytidine(1402) in 16S rRNA + S-adenosyl-L-homocysteine + H(+). Its function is as follows. Specifically methylates the N4 position of cytidine in position 1402 (C1402) of 16S rRNA. This is Ribosomal RNA small subunit methyltransferase H from Mycoplasmopsis synoviae (strain 53) (Mycoplasma synoviae).